A 561-amino-acid polypeptide reads, in one-letter code: Potassium-transporting ATPase potassium-binding subunit (561 aa).

Helical transmembrane passes span 4-24 (IVMQ…PLGI), 65-85 (AVSV…VLML), 133-153 (IGLT…LFAV), 177-197 (LYIL…QGVV), 253-273 (FTNL…VVMF), 285-305 (AIMT…TISE), 380-400 (GLYG…LLVG), 417-437 (MVCL…AVAV), 484-504 (MVGA…ALYL), and 528-548 (FIGL…LPAL).

Belongs to the KdpA family. As to quaternary structure, the system is composed of three essential subunits: KdpA, KdpB and KdpC.

Its subcellular location is the cell membrane. Part of the high-affinity ATP-driven potassium transport (or Kdp) system, which catalyzes the hydrolysis of ATP coupled with the electrogenic transport of potassium into the cytoplasm. This subunit binds the extracellular potassium ions and delivers the ions to the membrane domain of KdpB through an intramembrane tunnel. The polypeptide is Potassium-transporting ATPase potassium-binding subunit (Listeria monocytogenes serovar 1/2a (strain ATCC BAA-679 / EGD-e)).